Reading from the N-terminus, the 334-residue chain is WD repeat-containing protein 54 (334 aa).

WD repeat units follow at residues 116 to 155 (SSVQ…PNIV), 162 to 206 (GHQT…TLLT), and 250 to 289 (AHAR…ESGS).

In terms of assembly, homodimer and homotrimer; forms tight forms of dimers and trimers. Interacts with IZUMO1 and IZUMO1R/JUNO. Post-translationally, cross-linked to tightly form both dimers and trimers by TGM2. Cross-linking enhances the activation of EGF receptor-mediated signaling pathway. Cross-linking is inhibited by EGF. In terms of processing, ubiquitinated. EGF increases ubiquitination.

Its subcellular location is the vesicle. It is found in the cytoplasm. It localises to the cell membrane. Functionally, plays a role in the adhesion and fusion of the sperm-oocyte membrane through its interactions with IZUMO1 and IZUMO1R/JUNO. When cross-linked to form dimers and trimers, it has a regulatory effect on ERK signaling pathway activity in response to EGF stimulation. Colocalizes with the EGF receptor in WDR54-specific vesicle where it sustains the internalization and controls the degradation of the EGF receptor after EGF stimulation. The sequence is that of WD repeat-containing protein 54 from Mus musculus (Mouse).